The following is a 316-amino-acid chain: MLKVVLLMMIMMLASQSEAQLNRDFYKESCPSLFLVVRRVVKRAVAREPRMGASLLRLFFHDCFVNGCDGSLLLDDTPSFLGEKTSGPSNNSVRGFEVIDKIKFKVEKMCPGIVSCADILAITARDSVLLLGGPGWSVKLGRRDSTTANFAAANSGVIPPPITTLSNLINRFKAQGLSTRDMVALSGAHTIGRAQCVTFRNRIYNASNIDTSFAISKRRNCPATSGSGDNKKANLDVRSPDRFDHGFYKQLLSKKGLLTSDQVLFNNGPTDSLVIAYSHNLNAFYRDFARAMIKMGDISPLTGSNGQIRQNCRRPN.

Residues 1 to 19 form the signal peptide; sequence MLKVVLLMMIMMLASQSEA. A Pyrrolidone carboxylic acid modification is found at Q20. 4 cysteine pairs are disulfide-bonded: C30-C110, C63-C68, C116-C312, and C196-C221. H61 functions as the Proton acceptor in the catalytic mechanism. Residues D62, V65, G67, D69, and S71 each contribute to the Ca(2+) site. P159 lines the substrate pocket. H189 serves as a coordination point for heme b. Residue T190 coordinates Ca(2+). N-linked (GlcNAc...) asparagine glycosylation is present at N205. The Ca(2+) site is built by D236, S239, and D244.

The protein belongs to the peroxidase family. Classical plant (class III) peroxidase subfamily. Requires heme b as cofactor. The cofactor is Ca(2+).

It localises to the secreted. It catalyses the reaction 2 a phenolic donor + H2O2 = 2 a phenolic radical donor + 2 H2O. In terms of biological role, removal of H(2)O(2), oxidation of toxic reductants, biosynthesis and degradation of lignin, suberization, auxin catabolism, response to environmental stresses such as wounding, pathogen attack and oxidative stress. These functions might be dependent on each isozyme/isoform in each plant tissue. This chain is Peroxidase 67 (PER67), found in Arabidopsis thaliana (Mouse-ear cress).